We begin with the raw amino-acid sequence, 304 residues long: Murein tetrapeptide carboxypeptidase (304 aa).

Ser106 (nucleophile) is an active-site residue. Catalysis depends on charge relay system residues Glu200 and His270.

It belongs to the peptidase S66 family.

It localises to the cytoplasm. It catalyses the reaction N-acetyl-D-glucosaminyl-N-acetylmuramoyl-L-alanyl-meso-2,6-diaminoheptanedioyl-D-alanine + H2O = N-acetyl-D-glucosaminyl-N-acetylmuramoyl-L-alanyl-meso-2,6-diaminoheptanedioate + D-alanine. It participates in cell wall biogenesis; peptidoglycan recycling. Its activity is regulated as follows. Inhibited by beta-lactams containing a D-amino acid side chain. In terms of biological role, releases the terminal D-alanine residue from the cytoplasmic tetrapeptide recycling product L-Ala-gamma-D-Glu-meso-Dap-D-Ala. To a lesser extent, can also cleave D-Ala from murein derivatives containing the tetrapeptide, i.e. MurNAc-tetrapeptide, UDP-MurNAc-tetrapeptide, GlcNAc-MurNAc-tetrapeptide, and GlcNAc-anhMurNAc-tetrapeptide. Does not act on murein sacculi or cross-linked muropeptides. The tripeptides produced by the LcdA reaction can then be reused as peptidoglycan building blocks; LcdA is thereby involved in murein recycling. Is also essential for viability during stationary phase. The polypeptide is Murein tetrapeptide carboxypeptidase (ldcA) (Escherichia coli (strain K12)).